The following is a 363-amino-acid chain: Protein RecA (363 aa).

Gly-79 to Thr-86 provides a ligand contact to ATP.

The protein belongs to the RecA family.

The protein resides in the cytoplasm. Its function is as follows. Can catalyze the hydrolysis of ATP in the presence of single-stranded DNA, the ATP-dependent uptake of single-stranded DNA by duplex DNA, and the ATP-dependent hybridization of homologous single-stranded DNAs. It interacts with LexA causing its activation and leading to its autocatalytic cleavage. This chain is Protein RecA, found in Borrelia duttonii (strain Ly).